The chain runs to 263 residues: Shikimate dehydrogenase (NADP(+)) (263 aa).

Residues 16-18 (SKS) and threonine 65 contribute to the shikimate site. Lysine 69 acts as the Proton acceptor in catalysis. Shikimate contacts are provided by asparagine 90 and aspartate 105. Residues 125–129 (GAGGS), serine 181, and leucine 208 contribute to the NADP(+) site. Tyrosine 210 is a binding site for shikimate. Position 230 (glycine 230) interacts with NADP(+). Position 237 (glutamine 237) interacts with shikimate.

This sequence belongs to the shikimate dehydrogenase family. As to quaternary structure, homodimer.

It carries out the reaction shikimate + NADP(+) = 3-dehydroshikimate + NADPH + H(+). The protein operates within metabolic intermediate biosynthesis; chorismate biosynthesis; chorismate from D-erythrose 4-phosphate and phosphoenolpyruvate: step 4/7. In terms of biological role, involved in the biosynthesis of the chorismate, which leads to the biosynthesis of aromatic amino acids. Catalyzes the reversible NADPH linked reduction of 3-dehydroshikimate (DHSA) to yield shikimate (SA). This chain is Shikimate dehydrogenase (NADP(+)), found in Helicobacter pylori (strain ATCC 700392 / 26695) (Campylobacter pylori).